We begin with the raw amino-acid sequence, 238 residues long: RxLR effector protein PITG_14788 (238 aa).

The signal sequence occupies residues 1–23 (MKSLHAVNLVLLLLLACFAPAPA). The short motif at 47-65 (RLLRAHSSGKEEQKEEEER) is the RxLR-dEER element.

This sequence belongs to the RxLR effector family.

It localises to the secreted. Its subcellular location is the host cytoplasm. The protein resides in the host cytoskeleton. The protein localises to the host nucleus. It is found in the host nucleolus. Effector that enhances P.infestans colonization of Nicotiana benthamiana leaves. The sequence is that of RxLR effector protein PITG_14788 from Phytophthora infestans (strain T30-4) (Potato late blight agent).